We begin with the raw amino-acid sequence, 411 residues long: 2,3-bisphosphoglycerate-independent phosphoglycerate mutase (411 aa).

Belongs to the BPG-independent phosphoglycerate mutase family. A-PGAM subfamily.

It carries out the reaction (2R)-2-phosphoglycerate = (2R)-3-phosphoglycerate. It functions in the pathway carbohydrate degradation; glycolysis; pyruvate from D-glyceraldehyde 3-phosphate: step 3/5. Catalyzes the interconversion of 2-phosphoglycerate and 3-phosphoglycerate. This chain is 2,3-bisphosphoglycerate-independent phosphoglycerate mutase, found in Thermococcus kodakarensis (strain ATCC BAA-918 / JCM 12380 / KOD1) (Pyrococcus kodakaraensis (strain KOD1)).